Reading from the N-terminus, the 660-residue chain is Bifunctional polymyxin resistance protein ArnA (660 aa).

Positions 1–304 (MKTVVFAYHD…TLGLVQGSRL (304 aa)) are formyltransferase ArnAFT. 86-88 (HLI) serves as a coordination point for (6R)-10-formyltetrahydrofolate. H104 (proton donor; for formyltransferase activity) is an active-site residue. (6R)-10-formyltetrahydrofolate contacts are provided by residues R114 and 136-140 (VKRAD). Residues 314 to 660 (RRTRVLILGV…RTVDLTDKPL (347 aa)) form a dehydrogenase ArnADH region. Residues D347 and 368-369 (DI) each bind NAD(+). UDP-alpha-D-glucuronate-binding positions include A393, Y398, and 432–433 (TS). E434 (proton acceptor; for decarboxylase activity) is an active-site residue. UDP-alpha-D-glucuronate is bound by residues R460, N492, 526–535 (KLIDGGKQKR), and Y613. Catalysis depends on R619, which acts as the Proton donor; for decarboxylase activity.

This sequence in the N-terminal section; belongs to the Fmt family. UDP-L-Ara4N formyltransferase subfamily. The protein in the C-terminal section; belongs to the NAD(P)-dependent epimerase/dehydratase family. UDP-glucuronic acid decarboxylase subfamily. In terms of assembly, homohexamer, formed by a dimer of trimers.

It carries out the reaction UDP-alpha-D-glucuronate + NAD(+) = UDP-beta-L-threo-pentopyranos-4-ulose + CO2 + NADH. The enzyme catalyses UDP-4-amino-4-deoxy-beta-L-arabinose + (6R)-10-formyltetrahydrofolate = UDP-4-deoxy-4-formamido-beta-L-arabinose + (6S)-5,6,7,8-tetrahydrofolate + H(+). Its pathway is nucleotide-sugar biosynthesis; UDP-4-deoxy-4-formamido-beta-L-arabinose biosynthesis; UDP-4-deoxy-4-formamido-beta-L-arabinose from UDP-alpha-D-glucuronate: step 1/3. It functions in the pathway nucleotide-sugar biosynthesis; UDP-4-deoxy-4-formamido-beta-L-arabinose biosynthesis; UDP-4-deoxy-4-formamido-beta-L-arabinose from UDP-alpha-D-glucuronate: step 3/3. It participates in bacterial outer membrane biogenesis; lipopolysaccharide biosynthesis. Its function is as follows. Bifunctional enzyme that catalyzes the oxidative decarboxylation of UDP-glucuronic acid (UDP-GlcUA) to UDP-4-keto-arabinose (UDP-Ara4O) and the addition of a formyl group to UDP-4-amino-4-deoxy-L-arabinose (UDP-L-Ara4N) to form UDP-L-4-formamido-arabinose (UDP-L-Ara4FN). The modified arabinose is attached to lipid A and is required for resistance to polymyxin and cationic antimicrobial peptides. In Escherichia coli O6:K15:H31 (strain 536 / UPEC), this protein is Bifunctional polymyxin resistance protein ArnA.